Reading from the N-terminus, the 386-residue chain is S-adenosylmethionine synthase (386 aa).

His-17 is a binding site for ATP. A Mg(2+)-binding site is contributed by Asp-19. Glu-45 is a binding site for K(+). L-methionine contacts are provided by Glu-58 and Gln-101. The tract at residues 101–111 (QSPDISQGVTE) is flexible loop. Residues 168 to 170 (DAK), Asp-242, 248 to 249 (RK), Ala-265, and Lys-269 contribute to the ATP site. An L-methionine-binding site is contributed by Asp-242. Lys-273 contacts L-methionine.

This sequence belongs to the AdoMet synthase family. Homotetramer; dimer of dimers. Requires Mg(2+) as cofactor. K(+) serves as cofactor.

The protein localises to the cytoplasm. The catalysed reaction is L-methionine + ATP + H2O = S-adenosyl-L-methionine + phosphate + diphosphate. It participates in amino-acid biosynthesis; S-adenosyl-L-methionine biosynthesis; S-adenosyl-L-methionine from L-methionine: step 1/1. Its function is as follows. Catalyzes the formation of S-adenosylmethionine (AdoMet) from methionine and ATP. The overall synthetic reaction is composed of two sequential steps, AdoMet formation and the subsequent tripolyphosphate hydrolysis which occurs prior to release of AdoMet from the enzyme. This is S-adenosylmethionine synthase from Leptospira borgpetersenii serovar Hardjo-bovis (strain JB197).